Here is a 241-residue protein sequence, read N- to C-terminus: ATP synthase subunit a (241 aa).

8 consecutive transmembrane segments (helical) span residues 29–49 (NSSL…LFGI), 54–74 (VIPG…ISII), 86–106 (IPLI…GVLP), 114–134 (HVIV…IVGF), 153–173 (WLAP…PVSL), 177–197 (LAAN…FIVN), 200–220 (IFFT…EVFV), and 221–241 (AILQ…DAVK).

This sequence belongs to the ATPase A chain family. In terms of assembly, F-type ATPases have 2 components, CF(1) - the catalytic core - and CF(0) - the membrane proton channel. CF(1) has five subunits: alpha(3), beta(3), gamma(1), delta(1), epsilon(1). CF(0) has three main subunits: a(1), b(2) and c(9-12). The alpha and beta chains form an alternating ring which encloses part of the gamma chain. CF(1) is attached to CF(0) by a central stalk formed by the gamma and epsilon chains, while a peripheral stalk is formed by the delta and b chains.

The protein localises to the cell inner membrane. Functionally, key component of the proton channel; it plays a direct role in the translocation of protons across the membrane. The sequence is that of ATP synthase subunit a from Wolbachia sp. subsp. Drosophila simulans (strain wRi).